Here is a 196-residue protein sequence, read N- to C-terminus: MSKIQVAHSSRLANLIDYKLRVLTQDGRVYIGQLMAFDKHMNLVLNECIEERVPKTQLDKLRPRKDSKDGTTLNIKVEKRVLGLTILRGEQILSTVVEDKPLLSKKERLVRDKKEKKQAQKQTKLRKEKEKKPGKIAKPNTANAKHTSSNSREIAQPSSSRYNGGNDNIGANRSRFNNEAPPQTRKFQPPPGFKRK.

One can recognise a Sm domain in the interval 7 to 101; sequence AHSSRLANLI…ILSTVVEDKP (95 aa). The Nuclear localization signal motif lies at 105 to 132; the sequence is KKERLVRDKKEKKQAQKQTKLRKEKEKK. Residues 108–118 are compositionally biased toward basic and acidic residues; sequence RLVRDKKEKKQ. Residues 108-196 are disordered; it reads RLVRDKKEKK…FQPPPGFKRK (89 aa). Residues 140 to 181 are compositionally biased toward polar residues; it reads NTANAKHTSSNSREIAQPSSSRYNGGNDNIGANRSRFNNEAP.

Belongs to the snRNP SmB/SmN family. As to quaternary structure, component of the Sm core complex, present in spliceosomal snRNP U1, U2, U4/U6 and U5. The core complex contains SMB1, SMD1, SMD2, SMD3, SME1, SMX3 and SMX2 (Sm proteins B, D1, D2, D3, E, F and G, respectively), and is probably a heptameric ring structure. SMB1 specifically interacts with SMD3. Belongs to the CWC complex (or CEF1-associated complex), a spliceosome sub-complex reminiscent of a late-stage spliceosome composed of the U2, U5 and U6 snRNAs and at least BUD13, BUD31, BRR2, CDC40, CEF1, CLF1, CUS1, CWC2, CWC15, CWC21, CWC22, CWC23, CWC24, CWC25, CWC27, ECM2, HSH155, IST3, ISY1, LEA1, MSL1, NTC20, PRP8, PRP9, PRP11, PRP19, PRP21, PRP22, PRP45, PRP46, SLU7, SMB1, SMD1, SMD2, SMD3, SMX2, SMX3, SNT309, SNU114, SPP2, SYF1, SYF2, RSE1 and YJU2. Component of the U4/U6-U5 tri-snRNP complex composed of the U4, U6 and U5 snRNAs and at least PRP3, PRP4, PRP6, PRP8, PRP18, PRP38, SNU13, SNU23, SNU66, SNU114, SPP381, SMB1, SMD1, SMD2, SMD3, SMX2, SMX3, LSM2, LSM3, LSM4, LSM5, LSM6, LSM7, LSM8, BRR2 and DIB1. Interacts with the trimethylguanosine synthase TGS1.

It is found in the nucleus. The protein resides in the cytoplasm. Plays a role in pre-mRNA splicing as a core component of the spliceosomal U1, U2, U4 and U5 small nuclear ribonucleoproteins (snRNPs), the building blocks of the spliceosome. This is Small nuclear ribonucleoprotein-associated protein B (SMB1) from Saccharomyces cerevisiae (strain ATCC 204508 / S288c) (Baker's yeast).